The chain runs to 129 residues: Phosphomevalonate dehydratase small subunit (129 aa).

Catalysis depends on Ser61, which acts as the Proton acceptor.

This sequence belongs to the AcnX type II small subunit family. Heterodimer composed of a large subunit (PMDh-L) and a small subunit (PMDh-S).

The enzyme catalyses (R)-5-phosphomevalonate = (2E)-3-methyl-5-phosphooxypent-2-enoate + H2O. It functions in the pathway isoprenoid biosynthesis; isopentenyl diphosphate biosynthesis via mevalonate pathway. Functionally, component of a hydro-lyase that catalyzes the dehydration of mevalonate 5-phosphate (MVA5P) to form trans-anhydromevalonate 5-phosphate (tAHMP). Involved in the archaeal mevalonate (MVA) pathway, which provides fundamental precursors for isoprenoid biosynthesis, such as isopentenyl diphosphate (IPP) and dimethylallyl diphosphate (DMAPP). This chain is Phosphomevalonate dehydratase small subunit, found in Methanocaldococcus jannaschii (strain ATCC 43067 / DSM 2661 / JAL-1 / JCM 10045 / NBRC 100440) (Methanococcus jannaschii).